Consider the following 258-residue polypeptide: Deoxyribose-phosphate aldolase 2 (258 aa).

Aspartate 102 serves as the catalytic Proton donor/acceptor. The active-site Schiff-base intermediate with acetaldehyde is lysine 165. Lysine 199 acts as the Proton donor/acceptor in catalysis.

It belongs to the DeoC/FbaB aldolase family. DeoC type 2 subfamily.

The protein localises to the cytoplasm. It catalyses the reaction 2-deoxy-D-ribose 5-phosphate = D-glyceraldehyde 3-phosphate + acetaldehyde. Its pathway is carbohydrate degradation; 2-deoxy-D-ribose 1-phosphate degradation; D-glyceraldehyde 3-phosphate and acetaldehyde from 2-deoxy-alpha-D-ribose 1-phosphate: step 2/2. In terms of biological role, catalyzes a reversible aldol reaction between acetaldehyde and D-glyceraldehyde 3-phosphate to generate 2-deoxy-D-ribose 5-phosphate. This chain is Deoxyribose-phosphate aldolase 2 (deoC2), found in Vibrio vulnificus (strain YJ016).